Reading from the N-terminus, the 429-residue chain is C4-dicarboxylate transport protein (429 aa).

Transmembrane regions (helical) follow at residues 3 to 23 (VSIF…GVLL), 44 to 64 (LIKM…IAGM), 76 to 96 (IALL…LVVV), 144 to 164 (AFAS…GFAL), 184 to 204 (VIFG…FGAM), 222 to 242 (LILC…GTIA), 331 to 351 (TLLV…GSGF), and 352 to 372 (IVLA…LALI).

Belongs to the dicarboxylate/amino acid:cation symporter (DAACS) (TC 2.A.23) family.

The protein localises to the cell inner membrane. Functionally, responsible for the transport of dicarboxylates such as succinate, fumarate, and malate from the periplasm across the membrane. The polypeptide is C4-dicarboxylate transport protein (Yersinia pestis bv. Antiqua (strain Antiqua)).